Here is a 446-residue protein sequence, read N- to C-terminus: Glutamine synthetase (446 aa).

Residues 15–102 form the GS beta-grasp domain; it reads RDIRFVRLWF…MFCDITMPDG (88 aa). Residues 109–446 form the GS catalytic domain; that stretch reads PRHVLRRQLT…PYELRTYLSL (338 aa). Positions 132 and 134 each coordinate Mg(2+). Residue Glu-184 coordinates ATP. 2 residues coordinate Mg(2+): Glu-189 and Glu-196. Residue Gly-241 participates in L-glutamate binding. His-245 provides a ligand contact to Mg(2+). ATP-binding positions include 247 to 249 and Ser-249; that span reads HMS. L-glutamate contacts are provided by Arg-298, Glu-304, and Arg-316. Arg-316 and Arg-321 together coordinate ATP. A Mg(2+)-binding site is contributed by Glu-336. Arg-338 provides a ligand contact to L-glutamate.

This sequence belongs to the glutamine synthetase family. In terms of assembly, oligomer of 12 subunits arranged in the form of two hexagons. In its feedback-inhibited form, interacts with TnrA in order to block its DNA-binding activity. The cofactor is Mg(2+).

The protein resides in the cytoplasm. It carries out the reaction L-glutamate + NH4(+) + ATP = L-glutamine + ADP + phosphate + H(+). With respect to regulation, inhibited by glutamine. In terms of biological role, glutamine synthetase (GS) is an unusual multitasking protein that functions as an enzyme, a transcription coregulator, and a chaperone in ammonium assimilation and in the regulation of genes involved in nitrogen metabolism. It catalyzes the ATP-dependent biosynthesis of glutamine from glutamate and ammonia. Feedback-inhibited GlnA also interacts with and regulates the activity of the transcriptional regulator TnrA. During nitrogen limitation, TnrA is in its DNA-binding active state and turns on the transcription of genes required for nitrogen assimilation. Under conditions of nitrogen excess, feedback-inhibited GlnA forms a stable complex with TnrA, which inhibits its DNA-binding activity. In contrast, feedback-inhibited GlnA acts as a chaperone to stabilize the DNA-binding activity of GlnR, which represses the transcription of nitrogen assimilation genes. This is Glutamine synthetase from Mycobacterium bovis (strain ATCC BAA-935 / AF2122/97).